Here is a 702-residue protein sequence, read N- to C-terminus: MLHVKRTLVTTALPYANGPVHLGHLAGVYLPADLYVRYKRLKGDNIIHIGGSDEHGVPITLTAEKEGISPRDVVDRYHGMNLDAFTKCGISFNYYGRTTSAVHHATAREFFSEIENKGMFTRKTEKQFFDKKANRFLSDRYITGTCPICSNPDANGDQCEQCGTHLSPLELINPKSKLSDATPELRETLHWYFPLGRFQSELESYVQSHDKEWRPNVINYTRTWLKQGLNDRAITRDLSWGIKLPLETPEASGKVLYVWFDAVLGYISFTKEWAAQSGQPELWREYWQDPECRMINFIGKDNVVFHTLMFPAILMAWNKGRKTDLYNLADNVPASEFMNFEGRKFSKSRNYAVYLGDFLEKFPADTLRYCIAMNYPENKDSDFSWLDFQNRTNGELADTLGNFIKRSIDFTNSRFDGKVPCECTPEEWKIPGIDWKETLEKLDQAFEAFHFREATSLGMDIARTANRFLTESEPWKVIKSDREGAAKTMAISLNLCYALALVLYPVIPETANRILAMLGVEKSIDDQLDSGKSCIAQILTPQLEKGHQLRKHSEILFTKIEDAELAPELKKIEDLLALTEEREAKNEAKAMDFSPLISFDEFLKVDLRVATVLDCQKIKKAGKLLKLQLKVGSETRQVLAGIAKHYSPEEMIGKNVILVANLAERTILNEISQGMILAVEGTDGKLFLVEPSGKEINGKKIQ.

The short motif at 14–24 is the 'HIGH' region element; the sequence is PYANGPVHLGH. Zn(2+) is bound by residues cysteine 146, cysteine 149, cysteine 159, and cysteine 162. The 'KMSKS' region motif lies at 344–348; sequence KFSKS. Lysine 347 contributes to the ATP binding site. The 102-residue stretch at 601-702 folds into the tRNA-binding domain; sequence EFLKVDLRVA…GKEINGKKIQ (102 aa).

Belongs to the class-I aminoacyl-tRNA synthetase family. MetG type 1 subfamily. As to quaternary structure, homodimer. Zn(2+) is required as a cofactor.

It localises to the cytoplasm. The catalysed reaction is tRNA(Met) + L-methionine + ATP = L-methionyl-tRNA(Met) + AMP + diphosphate. Functionally, is required not only for elongation of protein synthesis but also for the initiation of all mRNA translation through initiator tRNA(fMet) aminoacylation. In Chlorobium phaeobacteroides (strain DSM 266 / SMG 266 / 2430), this protein is Methionine--tRNA ligase.